Consider the following 542-residue polypeptide: DM7 family protein GG17591 (542 aa).

Positions 415–430 (GETQEMDEAHPTKEES) are enriched in basic and acidic residues. The tract at residues 415–443 (GETQEMDEAHPTKEESKSEEEGEVQSGSQ) is disordered.

Belongs to the DM7 family.

In Drosophila erecta (Fruit fly), this protein is DM7 family protein GG17591.